The primary structure comprises 269 residues: Ribonuclease HII (269 aa).

Positions 83 to 269 constitute an RNase H type-2 domain; that stretch reads YLIAGVDEVG…HRMSFLTNIL (187 aa). Residues aspartate 89, glutamate 90, and aspartate 185 each coordinate a divalent metal cation.

The protein belongs to the RNase HII family. The cofactor is Mn(2+). Requires Mg(2+) as cofactor.

It is found in the cytoplasm. It catalyses the reaction Endonucleolytic cleavage to 5'-phosphomonoester.. In terms of biological role, endonuclease that specifically degrades the RNA of RNA-DNA hybrids. The polypeptide is Ribonuclease HII (Clostridium botulinum (strain ATCC 19397 / Type A)).